A 63-amino-acid polypeptide reads, in one-letter code: Large ribosomal subunit protein uL30 (63 aa).

Belongs to the universal ribosomal protein uL30 family. Part of the 50S ribosomal subunit.

The chain is Large ribosomal subunit protein uL30 from Granulibacter bethesdensis (strain ATCC BAA-1260 / CGDNIH1).